Here is a 1091-residue protein sequence, read N- to C-terminus: TATA element modulatory factor (1091 aa).

Disordered regions lie at residues 42-86 and 100-280; these read IPYG…KPVR and FLSP…DAKS. Positions 57-81 are enriched in polar residues; it reads WDTSTWGLNSTSSEPQSPPTASQAI. Serine 73, serine 78, serine 112, and serine 136 each carry phosphoserine. 3 stretches are compositionally biased toward low complexity: residues 111-122, 131-142, and 194-211; these read KSPVVSKPPSKS, SSLQESSSPGQS, and SENVVNVNTTEDVSTTST. Residue serine 213 is modified to Phosphoserine. Residues 217 to 234 are compositionally biased toward basic and acidic residues; sequence ETKDMALEPKEQKHEDRQ. Low complexity-rich tracts occupy residues 242 to 253 and 264 to 273; these read VSSFSSGTSTTS and ISESSASSRQ. Phosphoserine occurs at positions 324, 326, 329, 334, 340, and 357. Residues 329–338 are interaction with Elongin BC complex; sequence SLDSRSVSEI. A disordered region spans residues 360 to 443; sequence TPKTKVVEST…NQPKAPPEKE (84 aa). Positions 368 to 379 are enriched in acidic residues; that stretch reads STEENAEEEEGN. Phosphoserine is present on residues serine 411 and serine 540. Coiled-coil stretches lie at residues 443–767 and 824–894; these read EDVC…STAR and IQMS…SQLE. Serine 923 and serine 926 each carry phosphoserine. Position 927 is a phosphothreonine (threonine 927). Residue serine 931 is modified to Phosphoserine. The stretch at 984–1090 forms a coiled coil; the sequence is IENLQSQLKL…QIDELLRQRL (107 aa).

In terms of assembly, component of the SNF/SWI transcription factor complexes. Interacts with RAB6A. Interacts with TCEB1. Interacts with STAT3 and FER. Interacts with TRNP1; may regulate TRNP1 proteasomal degradation. Post-translationally, phosphorylated by FER.

Its subcellular location is the cytoplasm. It localises to the nucleus. It is found in the golgi apparatus membrane. Potential coactivator of the androgen receptor. May play critical roles in two RAB6-dependent retrograde transport processes: one from endosomes to the Golgi and the other from the Golgi to the ER. Mediates STAT3 degradation. This is TATA element modulatory factor (Tmf1) from Mus musculus (Mouse).